Consider the following 420-residue polypeptide: Transcriptional regulator Myc-B (420 aa).

Residues 78 to 86 (EMVTEFLGG) carry the 9aaTAD motif. Disordered regions lie at residues 141–181 (ALST…LQDP), 203–275 (ASSP…HHSP), and 319–345 (SNNR…NVLE). Over residues 143–160 (STSQCQSQPPQSPLKSPS) the composition is skewed to low complexity. The segment covering 161–172 (CDGSLNLGGTNR) has biased composition (polar residues). The span at 225–246 (ESEDEQEDDDDDEDCDEEEEID) shows a compositional bias: acidic residues. Residues 249 to 262 (TVEKRQTASRRMES) show a composition bias toward basic and acidic residues. Residues 319–329 (SNNRKCASPRS) show a composition bias toward polar residues. The region spanning 336-388 (DKRRTHNVLERQRRNELKLSFFALRDQVPRWRNNEKAPKVVILKKATEYAISM) is the bHLH domain. The interval 395–416 (LIRETEQLKYRKEQLKQRLQQL) is leucine-zipper.

Efficient DNA binding requires dimerization with another bHLH protein. Binds DNA as a heterodimer with MAX.

The protein resides in the nucleus. In terms of biological role, transcription factor that binds DNA in a non-specific manner, yet also specifically recognizes the core sequence 5'-CAC[GA]TG-3'. Activates the transcription of growth-related genes. This chain is Transcriptional regulator Myc-B (myc-b), found in Xenopus laevis (African clawed frog).